The primary structure comprises 403 residues: Na(+)-translocating NADH-quinone reductase subunit B (403 aa).

4 helical membrane-spanning segments follow: residues methionine 56–glycine 76, alanine 121–phenylalanine 141, leucine 164–glycine 184, and phenylalanine 195–alanine 212. Threonine 230 is modified (FMN phosphoryl threonine). The next 6 membrane-spanning stretches (helical) occupy residues alanine 237–isoleucine 257, threonine 265–tryptophan 285, isoleucine 287–serine 307, methionine 312–phenylalanine 332, tryptophan 348–phenylalanine 368, and glycine 371–valine 391.

The protein belongs to the NqrB/RnfD family. In terms of assembly, composed of six subunits; NqrA, NqrB, NqrC, NqrD, NqrE and NqrF. FMN serves as cofactor.

It localises to the cell inner membrane. The enzyme catalyses a ubiquinone + n Na(+)(in) + NADH + H(+) = a ubiquinol + n Na(+)(out) + NAD(+). NQR complex catalyzes the reduction of ubiquinone-1 to ubiquinol by two successive reactions, coupled with the transport of Na(+) ions from the cytoplasm to the periplasm. NqrA to NqrE are probably involved in the second step, the conversion of ubisemiquinone to ubiquinol. The sequence is that of Na(+)-translocating NADH-quinone reductase subunit B from Azotobacter vinelandii (strain DJ / ATCC BAA-1303).